The chain runs to 259 residues: Thiazole synthase (259 aa).

K95 serves as the catalytic Schiff-base intermediate with DXP. Residues G156, 182–183, and 204–205 contribute to the 1-deoxy-D-xylulose 5-phosphate site; these read AG and AS.

It belongs to the ThiG family. Homotetramer. Forms heterodimers with either ThiH or ThiS.

The protein localises to the cytoplasm. The enzyme catalyses [ThiS sulfur-carrier protein]-C-terminal-Gly-aminoethanethioate + 2-iminoacetate + 1-deoxy-D-xylulose 5-phosphate = [ThiS sulfur-carrier protein]-C-terminal Gly-Gly + 2-[(2R,5Z)-2-carboxy-4-methylthiazol-5(2H)-ylidene]ethyl phosphate + 2 H2O + H(+). Its pathway is cofactor biosynthesis; thiamine diphosphate biosynthesis. Catalyzes the rearrangement of 1-deoxy-D-xylulose 5-phosphate (DXP) to produce the thiazole phosphate moiety of thiamine. Sulfur is provided by the thiocarboxylate moiety of the carrier protein ThiS. In vitro, sulfur can be provided by H(2)S. This chain is Thiazole synthase, found in Corynebacterium aurimucosum (strain ATCC 700975 / DSM 44827 / CIP 107346 / CN-1) (Corynebacterium nigricans).